Here is a 103-residue protein sequence, read N- to C-terminus: MVYAIVRAGGRQEKVSVGDLVTLDRVAGEAGSTVELPALLLVDGDKVTSDSKTLADVKVTAEIIEDLRGPKISIMKYKNKTGYKKRQGFRAELTTVKITGIDA.

Belongs to the bacterial ribosomal protein bL21 family. As to quaternary structure, part of the 50S ribosomal subunit. Contacts protein L20.

Its function is as follows. This protein binds to 23S rRNA in the presence of protein L20. The polypeptide is Large ribosomal subunit protein bL21 (Kocuria rhizophila (strain ATCC 9341 / DSM 348 / NBRC 103217 / DC2201)).